Here is a 690-residue protein sequence, read N- to C-terminus: Methionine--tRNA ligase 1 (690 aa).

The 'HIGH' region signature appears at 11–21 (PYANGHIHIGH). The Zn(2+) site is built by C142, C145, C155, and C158. Residues 328-332 (KMSKS) carry the 'KMSKS' region motif. ATP is bound at residue K331. Residues 590 to 690 (DFSKVDLRVA…SGAKPGMRVH (101 aa)) form the tRNA-binding domain.

The protein belongs to the class-I aminoacyl-tRNA synthetase family. MetG type 1 subfamily. Homodimer. The cofactor is Zn(2+).

Its subcellular location is the cytoplasm. It catalyses the reaction tRNA(Met) + L-methionine + ATP = L-methionyl-tRNA(Met) + AMP + diphosphate. Is required not only for elongation of protein synthesis but also for the initiation of all mRNA translation through initiator tRNA(fMet) aminoacylation. The protein is Methionine--tRNA ligase 1 of Sorangium cellulosum (strain So ce56) (Polyangium cellulosum (strain So ce56)).